Consider the following 83-residue polypeptide: uncharacterized protein (83 aa).

The disordered stretch occupies residues 57–83; it reads ESVEEEEEFEDYDEFEEEEEYYYDDEY.

This is an uncharacterized protein from Archaeoglobus fulgidus (strain ATCC 49558 / DSM 4304 / JCM 9628 / NBRC 100126 / VC-16).